We begin with the raw amino-acid sequence, 691 residues long: L-type lectin-domain containing receptor kinase S.6 (691 aa).

Positions 1-25 (MNHHHYSLVIFHLILFLSLDFPTLS) are cleaved as a signal peptide. Over 26-311 (HRFSPPLQNL…VVGLKIPVWS (286 aa)) the chain is Extracellular. The segment at 27–257 (RFSPPLQNLT…LHIVERWKFR (231 aa)) is legume-lectin like. 2 N-linked (GlcNAc...) asparagine glycosylation sites follow: Asn34 and Asn89. A helical membrane pass occupies residues 312–332 (LLPGLAAIVILVAFIVFSLIC). At 333 to 691 (GKKRISEEAD…PWMTPKSHFS (359 aa)) the chain is on the cytoplasmic side. Positions 366–653 (FNENAIVGQG…IRGEAPLPVL (288 aa)) constitute a Protein kinase domain. Residues 372–380 (VGQGASATV) and Lys394 each bind ATP. Asp500 acts as the Proton acceptor in catalysis.

The protein in the C-terminal section; belongs to the protein kinase superfamily. Ser/Thr protein kinase family. In the N-terminal section; belongs to the leguminous lectin family.

Its subcellular location is the cell membrane. It carries out the reaction L-seryl-[protein] + ATP = O-phospho-L-seryl-[protein] + ADP + H(+). The enzyme catalyses L-threonyl-[protein] + ATP = O-phospho-L-threonyl-[protein] + ADP + H(+). Its function is as follows. Involved in resistance response to the pathogenic oomycetes Phytophthora infestans and Phytophthora capsici and to the pathogenic bacteria Pseudomonas syringae. The chain is L-type lectin-domain containing receptor kinase S.6 from Arabidopsis thaliana (Mouse-ear cress).